Reading from the N-terminus, the 216-residue chain is Neural cell adhesion molecule L1.2 (216 aa).

Residues 1 to 64 (EFFIHYLRKD…QTAGARVMEV (64 aa)) form the Fibronectin type-III domain. Residues 1–73 (EFFIHYLRKD…VKSGFVTESW (73 aa)) lie on the Extracellular side of the membrane. Residues Asn22 and Asn46 are each glycosylated (N-linked (GlcNAc...) asparagine). The helical transmembrane segment at 74-94 (FIGLISALVLLLLVLLILCFI) threads the bilayer. Residues 95-216 (KRSKGGKYSV…GLPNSAALLD (122 aa)) lie on the Cytoplasmic side of the membrane. 2 disordered regions span residues 127 to 149 (YRSL…CEDS) and 173 to 216 (DESL…ALLD). Residues 128–139 (RSLESDNEEKRT) show a composition bias toward basic and acidic residues.

The protein belongs to the immunoglobulin superfamily. L1/neurofascin/NgCAM family. As to expression, expressed in many postmitotic neurons in 16-36 hours embryos. Little or no expression in the olfactory placode, the anterior lateral line/acoustic ganglia complex, the posterior lateral line ganglion, late-developing hindbrain neurons and some Rohon-Beard cells in the spinal cord.

It is found in the cell membrane. It localises to the cell projection. Its subcellular location is the growth cone. Cell adhesion molecule with an important role in the development of the nervous system. Involved in neuron-neuron adhesion, neurite fasciculation, outgrowth of neurites, etc. Binds to axonin on neurons. The sequence is that of Neural cell adhesion molecule L1.2 (nadl1.2) from Danio rerio (Zebrafish).